We begin with the raw amino-acid sequence, 250 residues long: ATP synthase subunit a (250 aa).

The next 6 membrane-spanning stretches (helical) occupy residues 27 to 47, 85 to 105, 115 to 135, 141 to 161, 181 to 201, and 223 to 243; these read FTNA…FLTF, FFPL…VGLI, LIVT…YGFV, FLHL…LVVI, MLAG…LASA, and ELLV…IYLN.

This sequence belongs to the ATPase A chain family. In terms of assembly, F-type ATPases have 2 components, CF(1) - the catalytic core - and CF(0) - the membrane proton channel. CF(1) has five subunits: alpha(3), beta(3), gamma(1), delta(1), epsilon(1). CF(0) has three main subunits: a(1), b(2) and c(9-12). The alpha and beta chains form an alternating ring which encloses part of the gamma chain. CF(1) is attached to CF(0) by a central stalk formed by the gamma and epsilon chains, while a peripheral stalk is formed by the delta and b chains.

The protein localises to the cell inner membrane. Key component of the proton channel; it plays a direct role in the translocation of protons across the membrane. This chain is ATP synthase subunit a, found in Xanthobacter autotrophicus (strain ATCC BAA-1158 / Py2).